A 102-amino-acid chain; its full sequence is Small ribosomal subunit protein uS10 (102 aa).

Belongs to the universal ribosomal protein uS10 family. In terms of assembly, part of the 30S ribosomal subunit.

Its function is as follows. Involved in the binding of tRNA to the ribosomes. The sequence is that of Small ribosomal subunit protein uS10 from Bacillus cereus (strain ATCC 10987 / NRS 248).